Consider the following 188-residue polypeptide: Protein YecM (188 aa).

To H.influenzae HI_1582/HI_1581.

The chain is Protein YecM (yecM) from Escherichia coli (strain K12).